Reading from the N-terminus, the 208-residue chain is Uracil phosphoribosyltransferase (208 aa).

5-phospho-alpha-D-ribose 1-diphosphate contacts are provided by residues arginine 78, arginine 103, and 130–138; that span reads DPMLATGGS. Uracil-binding positions include isoleucine 193 and 198–200; that span reads GDA. Aspartate 199 is a binding site for 5-phospho-alpha-D-ribose 1-diphosphate.

Belongs to the UPRTase family. The cofactor is Mg(2+).

The enzyme catalyses UMP + diphosphate = 5-phospho-alpha-D-ribose 1-diphosphate + uracil. It functions in the pathway pyrimidine metabolism; UMP biosynthesis via salvage pathway; UMP from uracil: step 1/1. Allosterically activated by GTP. In terms of biological role, catalyzes the conversion of uracil and 5-phospho-alpha-D-ribose 1-diphosphate (PRPP) to UMP and diphosphate. In Psychromonas ingrahamii (strain DSM 17664 / CCUG 51855 / 37), this protein is Uracil phosphoribosyltransferase.